A 514-amino-acid polypeptide reads, in one-letter code: Nitric oxide reductase transcription regulator NorR1 (514 aa).

4-aspartylphosphate is present on Asp54. The region spanning 187–416 (IIGQSQAIAG…LEHVISRAAL (230 aa)) is the Sigma-54 factor interaction domain. ATP contacts are provided by residues 215–222 (GETGVGKE) and 287–296 (EVGELPLSIQ). The H-T-H motif DNA-binding region spans 490–509 (WAKAARQLGMDASNLHKLAK).

Its pathway is nitrogen metabolism; nitrate reduction (denitrification) [regulation]. Required for the nitric oxide (NO) induced expression of NO reductase. Not required for expression of 2 other pathway members, nitrate reductase (nirS) and nitrous oxide reductase (nosZ). The protein is Nitric oxide reductase transcription regulator NorR1 (norR1) of Cupriavidus necator (strain ATCC 17699 / DSM 428 / KCTC 22496 / NCIMB 10442 / H16 / Stanier 337) (Ralstonia eutropha).